A 907-amino-acid polypeptide reads, in one-letter code: Dual serine/threonine and tyrosine protein kinase (907 aa).

A coiled-coil region spans residues 373–409; the sequence is RKKENELYESLMNIANRKQEEMKDMIVETLNTMKEEL. Residues 630–884 enclose the Protein kinase domain; sequence PKLGQELGRG…PLLGIVQPML (255 aa). Residues 636-644 and lysine 659 each bind ATP; that span reads LGRGQYGVV. The Proton acceptor role is filled by aspartate 755.

It belongs to the protein kinase superfamily. Ser/Thr protein kinase family.

Its subcellular location is the cytoplasm. The protein resides in the cell membrane. The protein localises to the apical cell membrane. It localises to the basolateral cell membrane. It is found in the cell junction. The enzyme catalyses L-seryl-[protein] + ATP = O-phospho-L-seryl-[protein] + ADP + H(+). It catalyses the reaction L-threonyl-[protein] + ATP = O-phospho-L-threonyl-[protein] + ADP + H(+). The catalysed reaction is L-tyrosyl-[protein] + ATP = O-phospho-L-tyrosyl-[protein] + ADP + H(+). Functionally, acts as a positive regulator of ERK phosphorylation downstream of fibroblast growth factor-receptor activation. Involved in the regulation of both caspase-dependent apoptosis and caspase-independent cell death. In the skin, it plays a predominant role in suppressing caspase-dependent apoptosis in response to UV stress in a range of dermal cell types. This Macaca mulatta (Rhesus macaque) protein is Dual serine/threonine and tyrosine protein kinase.